The chain runs to 253 residues: uncharacterized protein (253 aa).

2 consecutive C2HC LYAR-type zinc fingers follow at residues 1-26 (MVFF…FQCR) and 27-51 (NTTF…VKCI). Residues Cys6, Cys9, His21, Cys25, Cys32, Cys35, His47, and Cys50 each contribute to the Zn(2+) site. Positions 136-171 (AAEADKMREEAIRKQEETQKMEKAQKEAAAAAKKET) form a coiled coil.

Its subcellular location is the nucleus. This is an uncharacterized protein from Caenorhabditis elegans.